A 721-amino-acid polypeptide reads, in one-letter code: Vacuolar transporter chaperone complex subunit 4 (721 aa).

An SPX domain is found at Met1–Ala146. Over Met1–Tyr631 the chain is Cytoplasmic. ATP-binding residues include Lys198, Arg262, Arg264, Lys279, Lys292, Tyr357, and Arg359. Glu421 is a Mn(2+) binding site. Lys453 is an active-site residue. Composition is skewed to polar residues over residues Gln490–Thr513 and Ile529–Phe547. Residues Gln490 to Phe547 are disordered. At Ser495 the chain carries Phosphoserine. Thr497 bears the Phosphothreonine mark. Ser501 carries the post-translational modification Phosphoserine. Phosphothreonine is present on Thr534. Ser546 carries the phosphoserine modification. The helical transmembrane segment at Leu632 to Ala652 threads the bilayer. Topologically, residues Lys653 to Gly657 are vacuolar. Residues Ile658 to Leu678 traverse the membrane as a helical segment. The Cytoplasmic portion of the chain corresponds to Tyr679–Arg697. A helical membrane pass occupies residues Phe698–Asn718. The Vacuolar segment spans residues Phe719–Ala721.

The protein belongs to the VTC4 family. As to quaternary structure, the VTC core complex is an integral membrane heterooligomer composed of at least the catalytic subunit vtc4 and the accessory subunits vtc1 and vtc2. vtc1 is a small membrane protein without hydrophilic domain. Vtc2 and vtc4 are related and have 2 hydrophilic domains that face the cytosol, an N-terminal SPX domain and the central core domain. The central core in vtc4 is the catalytic domain. Requires Mn(2+) as cofactor.

It localises to the vacuole membrane. The enzyme catalyses [phosphate](n) + ATP = [phosphate](n+1) + ADP. Its activity is regulated as follows. Activity of the enzyme is Mn(2+)-dependent and enhanced in the presence of pyrophosphate (PPi). Catalytic subunit of the vacuolar transporter chaperone (VTC) complex. The VTC complex acts as a vacuolar polyphosphate polymerase that catalyzes the synthesis of inorganic polyphosphate (polyP) via transfer of phosphate from ATP to a growing polyP chain, releasing ADP. VTC exposes its catalytic domain vtc4 to the cytosol, where the growing polyP chain winds through a tunnel-shaped pocket, integrating cytoplasmic polymer synthesis with polyP membrane translocation. The VTC complex carries 9 vacuolar transmembrane domains, which are likely to constitute the translocation channel into the organelle lumen. PolyP synthesis is tightly coupled to its transport into the vacuole lumen, in order to avoid otherwise toxic intermediates in the cytosol, and it depends on the proton gradient across the membrane, formed by V-ATPase. The VTC complex also plays a role in vacuolar membrane fusion. The polypeptide is Vacuolar transporter chaperone complex subunit 4 (vtc4) (Schizosaccharomyces pombe (strain 972 / ATCC 24843) (Fission yeast)).